The following is a 50-amino-acid chain: Insulin (50 aa).

Disulfide bonds link Cys-7–Cys-36, Cys-19–Cys-49, and Cys-35–Cys-40.

Belongs to the insulin family. In terms of assembly, heterodimer of a B chain and an A chain linked by two disulfide bonds.

The protein resides in the secreted. Insulin decreases blood glucose concentration. It increases cell permeability to monosaccharides, amino acids and fatty acids. It accelerates glycolysis, the pentose phosphate cycle, and glycogen synthesis in liver. The protein is Insulin (ins) of Myoxocephalus scorpius (Shorthorn sculpin).